A 214-amino-acid chain; its full sequence is MADS-box protein SOC1 (214 aa).

The MADS-box domain maps to 3–57; that stretch reads RGKTQMKRIENATSRQVTFSKRRNGLLKKAFELSVLCDAEVSLIIFSPKGKLYEF. The region spanning 87 to 177 is the K-box domain; it reads MQHLKYEAAN…SEKWGSHESE (91 aa). Residues 162 to 177 show a composition bias toward basic and acidic residues; it reads AENEKLSEKWGSHESE. The segment at 162 to 214 is disordered; that stretch reads AENEKLSEKWGSHESEVWSNKNQESTGRGDEESSPSSEVETQLFIGLPCSSRK. The span at 178-187 shows a compositional bias: polar residues; that stretch reads VWSNKNQEST.

Forms a heterodimer with AGL24 through MADS-box domain. Interacts with AGL15, AGL16 and AGL19. Interacts with OXS3 in the nucleus. In terms of tissue distribution, widely expressed. Not found in the apical meristem of short-day grown plants in vegetative stage.

The protein localises to the nucleus. It is found in the cytoplasm. Transcription activator active in flowering time control. May integrate signals from the photoperiod, vernalization and autonomous floral induction pathways. Can modulate class B and C homeotic genes expression. When associated with AGL24, mediates effect of gibberellins on flowering under short-day conditions, and regulates the expression of LEAFY (LFY), which links floral induction and floral development. This chain is MADS-box protein SOC1, found in Arabidopsis thaliana (Mouse-ear cress).